We begin with the raw amino-acid sequence, 261 residues long: Claudin-18 (261 aa).

The Cytoplasmic segment spans residues 1–6 (MSTTTC). The helical transmembrane segment at 7-27 (QVVAFLLSILGLAGCIAATGM) threads the bilayer. Residues 28–80 (DMWSTQDLYDNPVTSVFQYEGLWRSCVRQSSGFTECRPYFTILGLPAMLQAVR) are Extracellular-facing. Residues 81 to 101 (ALMIVGIVLGAIGLLVSIFAL) traverse the membrane as a helical segment. The Cytoplasmic portion of the chain corresponds to 102–122 (KCIRIGSMEDSAKANMTLTSG). The helical transmembrane segment at 123 to 143 (IMFIVSGLCAIAGVSVFANML) threads the bilayer. At 144–174 (VTNFWMSTANMYTGMGGMVQTVQTRYTFGAA) the chain is on the extracellular side. The helical transmembrane segment at 175–195 (LFVGWVAGGLTLIGGVMMCIA) threads the bilayer. The segment at 195-261 (ACRGLAPEET…QSYPSKHDYV (67 aa)) is required for role in regulation of RANKL-induced osteoclast differentiation. Over 196–261 (CRGLAPEETN…QSYPSKHDYV (66 aa)) the chain is Cytoplasmic. Ser214 carries the post-translational modification Phosphoserine. The disordered stretch occupies residues 242–261 (DGGARTEDEVQSYPSKHDYV).

Belongs to the claudin family. Interacts with TJP2/ZO-2. Interacts with TJP1/ZO-1. Interacts with YAP1 (phosphorylated); the interaction sequesters YAP1 away from the nucleus and thereby restricts transcription of YAP1 target genes. In terms of assembly, interacts with CLDN19. As to expression, expression is restricted to the lung. Expression is restricted to the stomach mucosa where it is predominantly observed in the epithelial cells of the pit region and the base of the gastric glands including exocrine and endocrine cells (at protein level).

It is found in the cell junction. The protein localises to the tight junction. The protein resides in the cell membrane. Its subcellular location is the lateral cell membrane. Its function is as follows. Involved in alveolar fluid homeostasis via regulation of alveolar epithelial tight junction composition and therefore ion transport and solute permeability, potentially via downstream regulation of the actin cytoskeleton organization and beta-2-adrenergic signaling. Required for lung alveolarization and maintenance of the paracellular alveolar epithelial barrier. Acts to maintain epithelial progenitor cell proliferation and organ size, via regulation of YAP1 localization away from the nucleus and thereby restriction of YAP1 target gene transcription. Acts as a negative regulator of RANKL-induced osteoclast differentiation, potentially via relocation of TJP2/ZO-2 away from the nucleus, subsequently involved in bone resorption in response to calcium deficiency. Mediates the osteoprotective effects of estrogen, potentially via acting downstream of estrogen signaling independently of RANKL signaling pathways. In terms of biological role, involved in the maintenance of homeostasis of the alveolar microenvironment via regulation of pH and subsequent T-cell activation in the alveolar space, is therefore indirectly involved in limiting C.neoformans infection. Functionally, required for the formation of the gastric paracellular barrier via its role in tight junction formation, thereby involved in the response to gastric acidification. The chain is Claudin-18 (CLDN18) from Homo sapiens (Human).